Consider the following 132-residue polypeptide: Large ribosomal subunit protein eL8 (132 aa).

Position 8 is an N6-acetyllysine; alternate (Lys-8). Lys-8 is covalently cross-linked (Glycyl lysine isopeptide (Lys-Gly) (interchain with G-Cter in SUMO2); alternate). Lys-36 participates in a covalent cross-link: Glycyl lysine isopeptide (Lys-Gly) (interchain with G-Cter in SUMO2). N6-acetyllysine is present on Lys-128.

It belongs to the eukaryotic ribosomal protein eL8 family. In terms of assembly, component of the large ribosomal subunit. Interacts with CRY1. Interacts with DICER1, AGO2, TARBP2, MOV10 and EIF6; they form a large RNA-induced silencing complex (RISC).

The protein localises to the cytoplasm. Functionally, component of the large ribosomal subunit. The ribosome is a large ribonucleoprotein complex responsible for the synthesis of proteins in the cell. The chain is Large ribosomal subunit protein eL8 (RPL7A) from Sus scrofa (Pig).